The sequence spans 126 residues: Large ribosomal subunit protein bL12 (126 aa).

This sequence belongs to the bacterial ribosomal protein bL12 family. As to quaternary structure, homodimer. Part of the ribosomal stalk of the 50S ribosomal subunit. Forms a multimeric L10(L12)X complex, where L10 forms an elongated spine to which 2 to 4 L12 dimers bind in a sequential fashion. Binds GTP-bound translation factors.

Forms part of the ribosomal stalk which helps the ribosome interact with GTP-bound translation factors. Is thus essential for accurate translation. This chain is Large ribosomal subunit protein bL12, found in Citrifermentans bemidjiense (strain ATCC BAA-1014 / DSM 16622 / JCM 12645 / Bem) (Geobacter bemidjiensis).